Reading from the N-terminus, the 99-residue chain is Late cornified envelope protein 4A (99 aa).

The disordered stretch occupies residues 78–99 (CYGSGSGQQSGGSGCCSGGGCC). Gly residues predominate over residues 81–99 (SGSGQQSGGSGCCSGGGCC).

The protein belongs to the LCE family. Interacts with CYSRT1; the interaction is direct. Skin-specific. Expression was readily detected in adult trunk skin, adult arm skin, fetal skin, penal skin, vulva, esophagus and tongue. Not expressed in the cervix, rectum, lung, colon, or placenta.

In terms of biological role, precursors of the cornified envelope of the stratum corneum. This is Late cornified envelope protein 4A (LCE4A) from Homo sapiens (Human).